The following is a 20-amino-acid chain: Thrombin-like enzyme Cdc SII (20 aa).

The protein belongs to the peptidase S1 family. Snake venom subfamily. In terms of assembly, monomer. As to expression, expressed by the venom gland.

The protein localises to the secreted. With respect to regulation, strongly inhibited by PMSF and moderately inhibited by leupeptin. Not inhibited by EDTA, aprotinin, pepstatin, and bestatin. Functionally, thrombin-like snake venom serine protease that coagulates human plasma and bovine fibrinogen by hydrolysis of the alpha chains (FGA) (minimum coagulation dose is 60 ug on fibrinogen). Has fibrinogenolytic activities, and degrades preferentially the Aalpha chain (FGA). Shows amidolytic activity toward N-benzoyl-L-Arg-p-nitroanilide, has a higher activity than Cdc SI. In vivo, intravenous injection induces defibrin(ogen)ation and a loss of the righting reflex and opisthotoxins, together with a typical gyroxin-like effect (18-20 minutes). Subcutaneous injection into the footpads induces moderate edema. Potentiates local hemorrhagic activity induced by metalloproteinases (BaP1). This chain is Thrombin-like enzyme Cdc SII, found in Crotalus durissus cumanensis (South American rattlesnake).